A 99-amino-acid polypeptide reads, in one-letter code: Plastocyanin (99 aa).

In terms of domain architecture, Plastocyanin-like spans 1–99 (IEIKLGGDDG…AGMVGKVTVQ (99 aa)). The Cu cation site is built by His-37, Cys-84, His-87, and Met-92.

This sequence belongs to the plastocyanin family. The cofactor is Cu(2+).

It is found in the plastid. Its subcellular location is the chloroplast thylakoid membrane. Its function is as follows. Participates in electron transfer between P700 and the cytochrome b6-f complex in photosystem I. In Rumex obtusifolius (Bitter dock), this protein is Plastocyanin (PETE).